The primary structure comprises 426 residues: D-tagatose-1,6-bisphosphate aldolase subunit KbaZ (426 aa).

This sequence belongs to the GatZ/KbaZ family. KbaZ subfamily. In terms of assembly, forms a complex with KbaY.

The protein operates within carbohydrate metabolism; D-tagatose 6-phosphate degradation; D-glyceraldehyde 3-phosphate and glycerone phosphate from D-tagatose 6-phosphate: step 2/2. In terms of biological role, component of the tagatose-1,6-bisphosphate aldolase KbaYZ that is required for full activity and stability of the Y subunit. Could have a chaperone-like function for the proper and stable folding of KbaY. When expressed alone, KbaZ does not show any aldolase activity. The chain is D-tagatose-1,6-bisphosphate aldolase subunit KbaZ from Escherichia coli O157:H7.